The chain runs to 91 residues: uncharacterized protein (91 aa).

The next 3 membrane-spanning stretches (helical) occupy residues 9 to 29, 44 to 64, and 71 to 91; these read VLWG…PFLP, LTVN…VFAW, and QFVF…CLAL.

It localises to the cell membrane. This is an uncharacterized protein from Bacillus subtilis (strain 168).